A 381-amino-acid polypeptide reads, in one-letter code: Succinyl-diaminopimelate desuccinylase (381 aa).

A Zn(2+)-binding site is contributed by His71. The active site involves Asp73. Asp104 contacts Zn(2+). Glu138 (proton acceptor) is an active-site residue. Zn(2+) contacts are provided by Glu139, Glu167, and His353.

It belongs to the peptidase M20A family. DapE subfamily. Homodimer. Requires Zn(2+) as cofactor. It depends on Co(2+) as a cofactor.

It carries out the reaction N-succinyl-(2S,6S)-2,6-diaminopimelate + H2O = (2S,6S)-2,6-diaminopimelate + succinate. It functions in the pathway amino-acid biosynthesis; L-lysine biosynthesis via DAP pathway; LL-2,6-diaminopimelate from (S)-tetrahydrodipicolinate (succinylase route): step 3/3. In terms of biological role, catalyzes the hydrolysis of N-succinyl-L,L-diaminopimelic acid (SDAP), forming succinate and LL-2,6-diaminopimelate (DAP), an intermediate involved in the bacterial biosynthesis of lysine and meso-diaminopimelic acid, an essential component of bacterial cell walls. The polypeptide is Succinyl-diaminopimelate desuccinylase (Shewanella piezotolerans (strain WP3 / JCM 13877)).